Reading from the N-terminus, the 382-residue chain is Lipid-A-disaccharide synthase (382 aa).

The protein belongs to the LpxB family.

It carries out the reaction a lipid X + a UDP-2-N,3-O-bis[(3R)-3-hydroxyacyl]-alpha-D-glucosamine = a lipid A disaccharide + UDP + H(+). It participates in bacterial outer membrane biogenesis; LPS lipid A biosynthesis. In terms of biological role, condensation of UDP-2,3-diacylglucosamine and 2,3-diacylglucosamine-1-phosphate to form lipid A disaccharide, a precursor of lipid A, a phosphorylated glycolipid that anchors the lipopolysaccharide to the outer membrane of the cell. In Alteromonas mediterranea (strain DSM 17117 / CIP 110805 / LMG 28347 / Deep ecotype), this protein is Lipid-A-disaccharide synthase.